We begin with the raw amino-acid sequence, 365 residues long: Protein Wnt-6 (365 aa).

The N-terminal stretch at 1–24 (MLPPLPSRLGLLLLLLLCPAHVGG) is a signal peptide. 11 cysteine pairs are disulfide-bonded: Cys-76-Cys-87, Cys-124-Cys-132, Cys-134-Cys-172, Cys-222-Cys-236, Cys-224-Cys-231, Cys-294-Cys-325, Cys-310-Cys-320, Cys-324-Cys-364, Cys-340-Cys-355, Cys-342-Cys-352, and Cys-347-Cys-348. An N-linked (GlcNAc...) asparagine glycan is attached at Asn-86. Over residues 140 to 158 (RAPPRPSGLPGTPGPPGPA) the composition is skewed to pro residues. Residues 140–164 (RAPPRPSGLPGTPGPPGPAGSPEGS) form a disordered region. The O-palmitoleoyl serine; by PORCN moiety is linked to residue Ser-228. N-linked (GlcNAc...) asparagine glycosylation occurs at Asn-311.

Belongs to the Wnt family. Interacts with PORCN. Post-translationally, palmitoleoylation is required for efficient binding to frizzled receptors. Depalmitoleoylation leads to Wnt signaling pathway inhibition. In terms of tissue distribution, expressed in gastric cancer cell lines and gastric cancer tissues (at protein level). Detected in the apical gland region of the gastric foveolar epithelium (at protein level).

The protein resides in the secreted. It is found in the extracellular space. Its subcellular location is the extracellular matrix. Functionally, ligand for members of the frizzled family of seven transmembrane receptors. Probable developmental protein. May be a signaling molecule which affects the development of discrete regions of tissues. Is likely to signal over only few cell diameters. Together with CAV1 may promote chemoresistance of gastric cancer cells to DNA-damaging anthracycline drugs through the activation of the canonical Wnt receptor signaling pathway. In Homo sapiens (Human), this protein is Protein Wnt-6 (WNT6).